A 170-amino-acid chain; its full sequence is uncharacterized protein (170 aa).

This is an uncharacterized protein from Acidianus bottle-shaped virus (isolate Italy/Pozzuoli) (ABV).